Reading from the N-terminus, the 448-residue chain is Homogentisate 1,2-dioxygenase (448 aa).

Residues His340, Glu346, and His377 each coordinate Fe cation.

The protein belongs to the homogentisate dioxygenase family. Requires Fe cation as cofactor.

The catalysed reaction is homogentisate + O2 = 4-maleylacetoacetate + H(+). Its pathway is amino-acid degradation; L-phenylalanine degradation; acetoacetate and fumarate from L-phenylalanine: step 4/6. This Emericella nidulans (strain FGSC A4 / ATCC 38163 / CBS 112.46 / NRRL 194 / M139) (Aspergillus nidulans) protein is Homogentisate 1,2-dioxygenase (hmgA).